Reading from the N-terminus, the 309-residue chain is Glutaminase (309 aa).

Substrate contacts are provided by serine 64, asparagine 114, glutamate 160, asparagine 167, tyrosine 191, tyrosine 243, and valine 261.

The protein belongs to the glutaminase family. In terms of assembly, homotetramer.

The enzyme catalyses L-glutamine + H2O = L-glutamate + NH4(+). This Rhizobium etli (strain CIAT 652) protein is Glutaminase.